The following is a 445-amino-acid chain: Glutamate-1-semialdehyde 2,1-aminomutase (445 aa).

Lysine 263 bears the N6-(pyridoxal phosphate)lysine mark.

It belongs to the class-III pyridoxal-phosphate-dependent aminotransferase family. HemL subfamily. Requires pyridoxal 5'-phosphate as cofactor.

The protein localises to the cytoplasm. The catalysed reaction is (S)-4-amino-5-oxopentanoate = 5-aminolevulinate. It functions in the pathway porphyrin-containing compound metabolism; protoporphyrin-IX biosynthesis; 5-aminolevulinate from L-glutamyl-tRNA(Glu): step 2/2. The chain is Glutamate-1-semialdehyde 2,1-aminomutase from Haloarcula marismortui (strain ATCC 43049 / DSM 3752 / JCM 8966 / VKM B-1809) (Halobacterium marismortui).